The sequence spans 335 residues: MKLPARVFFTLGSRLPCGLAPRRFFSYGTKILYQNTEALQSKFFSPLQKAMLPPNSFQGKVAFITGGGTGLGKGMTTLLSSLGAQCVIASRKMDVLKATAEQISSQTGNKVHAIQCDVRDPDMVQNTVSELIKVAGHPNIVINNAAGNFISPTERLSPNAWKTITDIVLNGTAFVTLEIGKQLIKAQKGAAFLSITTIYAETGSGFVVPSASAKAGVEAMSKSLAAEWGKYGMRFNVIQPGPIKTKGAFSRLDPTGTFEKEMIGRIPCGRLGTVEELANLAAFLCSDYASWINGAVIKFDGGEEVLISGEFNDLRKVTKEQWDTIEELIRKTKGS.

The N-terminal 34 residues, 1–34 (MKLPARVFFTLGSRLPCGLAPRRFFSYGTKILYQ), are a transit peptide targeting the mitochondrion. An N6-acetyllysine; alternate mark is found at Lys-42 and Lys-49. An N6-succinyllysine; alternate mark is found at Lys-42 and Lys-49. An NADP(+)-binding site is contributed by 66–71 (GGGTGL). Thr-69 carries the phosphothreonine modification. N6-succinyllysine is present on Lys-73. Arg-91 contributes to the NADP(+) binding site. Arg-91 lines the substrate pocket. Residue Lys-97 is modified to N6-acetyllysine; alternate. Lys-97 bears the N6-succinyllysine; alternate mark. Residue Asp-117 coordinates NADP(+). Substrate-binding residues include Arg-119, Phe-149, and Ser-157. Residue Tyr-199 is the Proton acceptor of the active site. Lys-214 lines the NADP(+) pocket. Lys-230 carries the N6-acetyllysine modification. 240 to 243 (PGPI) serves as a coordination point for NADP(+). Residue Lys-244 is modified to N6-acetyllysine; alternate. Residue Lys-244 is modified to N6-succinyllysine; alternate. Arg-251 is a binding site for substrate. 2 positions are modified to N6-acetyllysine; alternate: Lys-260 and Lys-319. 2 positions are modified to N6-succinyllysine; alternate: Lys-260 and Lys-319.

Belongs to the short-chain dehydrogenases/reductases (SDR) family. 2,4-dienoyl-CoA reductase subfamily. In terms of assembly, homotetramer. As to expression, heart = liver = pancreas &gt; kidney &gt;&gt; skeletal muscle = lung.

It localises to the mitochondrion. It catalyses the reaction a (2E,4E)-dienoyl-CoA + NADPH + H(+) = a 4,5-saturated-(3E)-enoyl-CoA + NADP(+). It carries out the reaction a (2E,4Z)-dienoyl-CoA + NADPH + H(+) = a 4,5-saturated-(3E)-enoyl-CoA + NADP(+). The catalysed reaction is (2E,4E)-hexadienoyl-CoA + NADPH + H(+) = (3E)-hexenoyl-CoA + NADP(+). Its function is as follows. Auxiliary enzyme of beta-oxidation. It participates in the metabolism of unsaturated fatty enoyl-CoA esters having double bonds in both even- and odd-numbered positions in mitochondria. Catalyzes the NADP-dependent reduction of 2,4-dienoyl-CoA to yield trans-3-enoyl-CoA. This is 2,4-dienoyl-CoA reductase [(3E)-enoyl-CoA-producing], mitochondrial (DECR1) from Homo sapiens (Human).